The following is a 122-amino-acid chain: Large ribosomal subunit protein uL14 (122 aa).

It belongs to the universal ribosomal protein uL14 family. As to quaternary structure, part of the 50S ribosomal subunit. Forms a cluster with proteins L3 and L19. In the 70S ribosome, L14 and L19 interact and together make contacts with the 16S rRNA in bridges B5 and B8.

Functionally, binds to 23S rRNA. Forms part of two intersubunit bridges in the 70S ribosome. This chain is Large ribosomal subunit protein uL14, found in Thermotoga petrophila (strain ATCC BAA-488 / DSM 13995 / JCM 10881 / RKU-1).